A 79-amino-acid polypeptide reads, in one-letter code: Protein GOLVEN 2 (79 aa).

Positions 1-26 are cleaved as a signal peptide; it reads MAIRVSHKSFLVALLLILFISSPTQA. A propeptide spanning residues 27–65 is cleaved from the precursor; sequence RSLREVVRNRTLLVVEKSQESRKIRHEGGGSDVDGLMDM. The tract at residues 49–79 is disordered; that stretch reads KIRHEGGGSDVDGLMDMDYNSANKKRPIHNR. Position 67 is a sulfotyrosine (Y67). The residue at position 75 (P75) is a Hydroxyproline.

Belongs to the RGF family. As to quaternary structure, binds to LRR receptor-like serine/threonine-protein kinases to trigger their dimerization with SERK proteins and subsequent signaling. As to expression, expressed in siliques, stems, hypocotyls, shoot apex, leaves, flowers and cotyledons, and, to a lower extent, in roots.

The protein localises to the secreted. The protein resides in the endoplasmic reticulum. Functionally, signaling peptide (root growth factor) that regulates the pattern of root growth and lateral root development by modulating the length and the number of cortical cells in the root apical meristem (RAM), and the anticlinal asymmetric cell divisions in lateral root initiation cells. Also involved in the regulation of hypocotyl bending and root gravitropism, probably by influencing the formation of auxin gradients. Maintains the postembryonic root stem cell niche. This Arabidopsis thaliana (Mouse-ear cress) protein is Protein GOLVEN 2.